The chain runs to 155 residues: MKLQLVAVGTKMPDWVQTGFTEYLRRFPKDMPFELIEIPAGKRGKNADIKRILDKEGEQMLAAAGKNRIVTLDIPGKPWDTPQLAAELERWKLDGRDVSLLIGGPEGLSPACKAAAEQSWSLSALTLPHPLVRVLVAESLYRAWSITTNHPYHRE.

S-adenosyl-L-methionine is bound by residues leucine 72, glycine 103, and 122–127 (LSALTL).

Belongs to the RNA methyltransferase RlmH family. Homodimer.

The protein localises to the cytoplasm. It catalyses the reaction pseudouridine(1915) in 23S rRNA + S-adenosyl-L-methionine = N(3)-methylpseudouridine(1915) in 23S rRNA + S-adenosyl-L-homocysteine + H(+). Functionally, specifically methylates the pseudouridine at position 1915 (m3Psi1915) in 23S rRNA. This chain is Ribosomal RNA large subunit methyltransferase H, found in Shigella boydii serotype 18 (strain CDC 3083-94 / BS512).